Consider the following 274-residue polypeptide: Eukaryotic translation initiation factor 3 subunit G-2 (274 aa).

In terms of domain architecture, RRM spans 194–272 (SAVRISNLSE…LILCVEWSKP (79 aa)).

It belongs to the eIF-3 subunit G family. Component of the eukaryotic translation initiation factor 3 (eIF-3) complex. The eIF-3 complex interacts with pix.

The protein localises to the cytoplasm. RNA-binding component of the eukaryotic translation initiation factor 3 (eIF-3) complex, which is involved in protein synthesis of a specialized repertoire of mRNAs and, together with other initiation factors, stimulates binding of mRNA and methionyl-tRNAi to the 40S ribosome. The eIF-3 complex specifically targets and initiates translation of a subset of mRNAs involved in cell proliferation. This subunit can bind 18S rRNA. This chain is Eukaryotic translation initiation factor 3 subunit G-2, found in Drosophila pseudoobscura pseudoobscura (Fruit fly).